Reading from the N-terminus, the 412-residue chain is uncharacterized protein (412 aa).

Zn(2+) is bound at residue His-49. Glu-52 (proton acceptor) is an active-site residue. His-53 and Glu-129 together coordinate Zn(2+).

It belongs to the peptidase M16 family. Requires Zn(2+) as cofactor.

This is an uncharacterized protein from Rickettsia typhi (strain ATCC VR-144 / Wilmington).